A 519-amino-acid chain; its full sequence is Probable DNA ligase (519 aa).

Residue E211 coordinates ATP. K213 functions as the N6-AMP-lysine intermediate in the catalytic mechanism. 6 residues coordinate ATP: R218, R233, E262, F302, R374, and K380.

This sequence belongs to the ATP-dependent DNA ligase family. Mg(2+) serves as cofactor.

The enzyme catalyses ATP + (deoxyribonucleotide)n-3'-hydroxyl + 5'-phospho-(deoxyribonucleotide)m = (deoxyribonucleotide)n+m + AMP + diphosphate.. Functionally, DNA ligase that seals nicks in double-stranded DNA during DNA replication, DNA recombination and DNA repair. The polypeptide is Probable DNA ligase (Anaeromyxobacter sp. (strain Fw109-5)).